Here is a 783-residue protein sequence, read N- to C-terminus: Cilia- and flagella-associated protein 91 (783 aa).

Over residues 748-760 the composition is skewed to acidic residues; sequence EDFELEEEAESLD. Residues 748 to 783 form a disordered region; the sequence is EDFELEEEAESLDSEVPTVSVSKTSTIKPTQDEGEG. Residues 764–776 are compositionally biased toward polar residues; that stretch reads PTVSVSKTSTIKP.

The protein belongs to the CFAP91 family. Part of a complex containing MYCBP, AKAP1 and PRKAR2B. Interacts with MYCBP and AKAP1. Interacts with CFAP61. Phosphorylated by PKA. Expressed in the testis, in cells involved in spermatogenesis.

The protein localises to the cytoplasm. Its subcellular location is the mitochondrion. The protein resides in the cytoskeleton. It is found in the cilium axoneme. Its function is as follows. Involved in sperm flagellum axonemal organization and function. May regulate cilium motility through its role in the assembly of the axonemal radial spokes. In Mus musculus (Mouse), this protein is Cilia- and flagella-associated protein 91.